The chain runs to 442 residues: Trigger factor (442 aa).

The PPIase FKBP-type domain occupies 165 to 250 (DDRVIIDFEG…LQKVMAPELP (86 aa)).

This sequence belongs to the FKBP-type PPIase family. Tig subfamily.

Its subcellular location is the cytoplasm. It carries out the reaction [protein]-peptidylproline (omega=180) = [protein]-peptidylproline (omega=0). In terms of biological role, involved in protein export. Acts as a chaperone by maintaining the newly synthesized protein in an open conformation. Functions as a peptidyl-prolyl cis-trans isomerase. The chain is Trigger factor from Coxiella burnetii (strain CbuK_Q154) (Coxiella burnetii (strain Q154)).